The following is a 148-amino-acid chain: Deoxyuridine 5'-triphosphate nucleotidohydrolase (148 aa).

Substrate is bound by residues 65–67, Asn78, 82–84, and Lys92; these read RSG and TID.

It belongs to the dUTPase family. Mg(2+) serves as cofactor.

The catalysed reaction is dUTP + H2O = dUMP + diphosphate + H(+). It participates in pyrimidine metabolism; dUMP biosynthesis; dUMP from dCTP (dUTP route): step 2/2. Functionally, this enzyme is involved in nucleotide metabolism: it produces dUMP, the immediate precursor of thymidine nucleotides and it decreases the intracellular concentration of dUTP so that uracil cannot be incorporated into DNA. The sequence is that of Deoxyuridine 5'-triphosphate nucleotidohydrolase from Chlorobium luteolum (strain DSM 273 / BCRC 81028 / 2530) (Pelodictyon luteolum).